We begin with the raw amino-acid sequence, 178 residues long: Large ribosomal subunit protein eL20x (178 aa).

It belongs to the eukaryotic ribosomal protein eL20 family.

The chain is Large ribosomal subunit protein eL20x (RPL18AC) from Arabidopsis thaliana (Mouse-ear cress).